The following is a 591-amino-acid chain: Isocitrate dehydrogenase kinase/phosphatase (591 aa).

Residues 315–321 (APGVKGM) and K336 each bind ATP. D371 is an active-site residue.

Belongs to the AceK family.

The protein resides in the cytoplasm. The catalysed reaction is L-seryl-[isocitrate dehydrogenase] + ATP = O-phospho-L-seryl-[isocitrate dehydrogenase] + ADP + H(+). Its function is as follows. Bifunctional enzyme which can phosphorylate or dephosphorylate isocitrate dehydrogenase (IDH) on a specific serine residue. This is a regulatory mechanism which enables bacteria to bypass the Krebs cycle via the glyoxylate shunt in response to the source of carbon. When bacteria are grown on glucose, IDH is fully active and unphosphorylated, but when grown on acetate or ethanol, the activity of IDH declines drastically concomitant with its phosphorylation. This chain is Isocitrate dehydrogenase kinase/phosphatase, found in Pectobacterium carotovorum subsp. carotovorum (strain PC1).